A 172-amino-acid polypeptide reads, in one-letter code: Translocon-associated protein subunit delta (172 aa).

The N-terminal stretch at 1–23 (MAAMASFGALALLLLSGLSCCSE) is a signal peptide. At 24–143 (ACLEPQITPS…SVDHRGTWNG (120 aa)) the chain is on the lumenal side. Cys25 and Cys56 are oxidised to a cystine. Residue Lys72 forms a Glycyl lysine isopeptide (Lys-Gly) (interchain with G-Cter in ubiquitin) linkage. Residues 144–164 (PWVSTEVLAAVIGIVIYYLAF) traverse the membrane as a helical segment. Residues 165 to 172 (SAKSHIQA) are Cytoplasmic-facing.

The protein belongs to the TRAP-delta family. As to quaternary structure, heterotetramer of TRAP-alpha, TRAP-beta, TRAP-delta and TRAP-gamma.

The protein resides in the endoplasmic reticulum membrane. In terms of biological role, TRAP proteins are part of a complex whose function is to bind calcium to the ER membrane and thereby regulate the retention of ER resident proteins. The protein is Translocon-associated protein subunit delta (Ssr4) of Mus musculus (Mouse).